The sequence spans 232 residues: MSGRRRRLTESVSTRVGSYHVADAVALQREGAAMVVGIDILLTWNGSLPFSLGDLRFLHCVRSERRSCGKSLPGMNSSRVNMAETSGISAFTQFWGCIRLDGSCEVTRRPAMDLHGHHYREAYLQPAIMDGPCTGASSSARGRDGKKALIHRLLAALCPVRCPAKISGSSVRPMLAASRISGPVRSFIASCRRQDEQMNGRSQMRDCARRAFLPLRVSDARSEWICFIVAIW.

It belongs to the MQO family. Requires FAD as cofactor.

In terms of biological role, oxidoreductase; part of the gene cluster that mediates the biosynthesis of elsinochromes, pigments consisting of at least four interconvertible tautomers (A, B, C and D) that have a core phenolic quinone to which various side chains are attached and which play an important role in fungal pathogenesis. The non-reducing polyketide synthase PKS1 was proposed to iteratively catalyze decarboxylation between acetyl-CoA and malonyl-CoA subunits for polyketide chain elongation. The released polyketide undergoes cyclization to form an aromatic ring, and proceeds via serial modification steps to produce the heptaketide back- bone of elsinochrome. As elsinochrome has a symmetrical structure, two identical heptaketides are fused to form a core 1,2-dihydrobenzo-perylene ring structure, which can then be successively modified to produce the various derivatives of elsinochrome. Some of these reactions may be cooperatively carried out, at least in part, by the products of RDT1, OXR1 and PKS1. PRF1, embedded within the elsinochrome cluster possibly functions to stabilize some of the biosynthetic enzymes required for elsinochrome production. As prefoldin is a hexamer containing 2 a and 4 b subunits, additional prefoldin subunits, whose coding genes may not immediately link to the elsinochrome biosynthetic gene cluster, are required to fulfill the chaperone function. In addition, no methyltransferase-coding gene exists within the biosynthetic gene cluster, even though elsinochrome has four methyl groups at positions C3, C7, C8 and C12. Apparently, the identified gene cluster does not contain the entire entourage of genes responsible for elsinochrome biosynthesis. Once elsinochrome is synthesized, it must be exported outside the fungal cells, which is probably accomplished by the ECT1 transporter, to avoid toxicity. In Elsinoe fawcettii (Citrus scab fungus), this protein is Oxidoreductase 1.